The following is a 746-amino-acid chain: MEYTHQSSWIIPFIPLPVPILIGVGLLLFPTATKNLRRMWAFPSIFLLTIVMIFSIDLSIQQIENSSIYQYVWSWTINNDLSLEFGYLIDSLTSIMSILITTVGILVLIYSDSYMSHDQGYLRFFTYMSFFNTSMLGLVTSSNLIQVYIFWELVGMCSYLLIGFWFTRPIAANACQKAFVTNRVGDFGLLLGILGFYWITGSLEFRDLFQIFKNLIYKNEVNILFVTLCALLLFCGSVAKSAQFPLHVWLPDAMEGPTPISALIHAATMVAAGIFLVARLLPLFIVIPSIMSGIALIGIITVVLGATLAIAQKDIKKNLAYSTMSQLGYMMLALGMGSYRAALFHLITHAYSKALLFLGSGSIIHSMEAIVGYSPDKSQNMVLMGGLTKHAPITKMSFLIGTLSLCGIPPFACFWSKDEILNDSWLYSPIFAIIACSTAGLTAFYMFRIYLLVFEGYLNVHFQNFNGKKNSSFYSISLWGKEEKKKLKKKIHLLGFLTMNNNERTSFFRERTYSHRINRNVKSIRRLFLDSTHFGTKNLPFFYPHESDNTMLFSMLVLVLFTFFVGSIGISFSQEGIDLDILSKLLIPSIDLLHQNSKNSVDWYEFFINATFSVSIAFFGLFIASFFYKPVFSSLQNLNLFNLFQKNVPKKIISDKIINILYDWSYNRGYIDAFFEVSLIASVRKLAKFNYFFDRQLIDGIPNGVGISNFFIGEAIKYVGGGRISSYIFFFVLIFLLICYYIYLFP.

16 consecutive transmembrane segments (helical) span residues 9–29, 40–60, 89–109, 121–140, 147–167, 185–205, 219–239, 258–278, 280–300, 327–347, 354–374, 396–416, 425–445, 552–572, 606–626, and 726–746; these read WIIP…LLLF, WAFP…DLSI, IDSL…LVLI, YLRF…GLVT, VYIF…FWFT, GDFG…SLEF, NEVN…GSVA, TPIS…FLVA, LLPL…IGII, LGYM…FHLI, ALLF…VGYS, MSFL…CFWS, WLYS…TAFY, LFSM…GISF, FFIN…IASF, and SYIF…YLFP.

It belongs to the complex I subunit 5 family. As to quaternary structure, NDH is composed of at least 16 different subunits, 5 of which are encoded in the nucleus.

It localises to the plastid. It is found in the chloroplast thylakoid membrane. The catalysed reaction is a plastoquinone + NADH + (n+1) H(+)(in) = a plastoquinol + NAD(+) + n H(+)(out). It carries out the reaction a plastoquinone + NADPH + (n+1) H(+)(in) = a plastoquinol + NADP(+) + n H(+)(out). NDH shuttles electrons from NAD(P)H:plastoquinone, via FMN and iron-sulfur (Fe-S) centers, to quinones in the photosynthetic chain and possibly in a chloroplast respiratory chain. The immediate electron acceptor for the enzyme in this species is believed to be plastoquinone. Couples the redox reaction to proton translocation, and thus conserves the redox energy in a proton gradient. This Vicia faba (Broad bean) protein is NAD(P)H-quinone oxidoreductase subunit 5, chloroplastic (ndhF).